We begin with the raw amino-acid sequence, 129 residues long: Nif-specific regulatory protein (129 aa).

A Sigma-54 factor interaction domain is found at 1–46; it reads EFLLTKIGRQQGRPLTVTDSAIRLLMSHRWPGNVRDVENCLERSAI. Residues 101 to 129 constitute a DNA-binding region (H-T-H motif); the sequence is QAKAARLLGMTPRQIAYRIQTLNIHMRKI.

As to quaternary structure, interacts with sigma-54.

Functionally, required for activation of most nif operons, which are directly involved in nitrogen fixation. The protein is Nif-specific regulatory protein (nifA) of Azotobacter chroococcum mcd 1.